Here is an 847-residue protein sequence, read N- to C-terminus: Glycogen phosphorylase, liver form (847 aa).

At Ala2 the chain carries N-acetylalanine. The residue at position 15 (Ser15) is a Phosphoserine; by PHK; in form phosphorylase a. Residues 43–45 (DRN), Tyr76, and Arg310 contribute to the AMP site. N6-succinyllysine is present on Lys364. An N6-acetyllysine modification is found at Lys470. Residues Ser524, Ser561, and Ser639 each carry the phosphoserine modification. Residue Lys681 is modified to N6-(pyridoxal phosphate)lysine. Lys796 carries the N6-acetyllysine modification.

Belongs to the glycogen phosphorylase family. In terms of assembly, homodimer; enzymatically active. Interacts with PPP1R3B; recruits the phosphatase PP1 which dephosphorylates and inactivates PYGL/glycogen phosphorylase. Pyridoxal 5'-phosphate is required as a cofactor. Acetylation, which is up-regulated by glucose and insulin and down-regulated by glucagon, inhibits the glycogen phosphorylase activity by promoting PPP1R3B-mediated recruitment of phosphatase PP1 and Ser-15 dephosphorylation. In terms of processing, phosphorylation at Ser-15 converts inactive phosphorylase b into active phosphorylase a. Dephosphorylation of Ser-15 by phosphatase PP1 inactivates the enzyme.

The protein resides in the cytoplasm. It is found in the cytosol. The enzyme catalyses [(1-&gt;4)-alpha-D-glucosyl](n) + phosphate = [(1-&gt;4)-alpha-D-glucosyl](n-1) + alpha-D-glucose 1-phosphate. Allosterically regulated through the non-covalent binding of metabolites, being activated by AMP and inhibited by ATP, ADP, and glucose-6-phosphate. The activity is also controlled by post-translational modifications including phosphorylation and acetylation. Functionally, allosteric enzyme that catalyzes the rate-limiting step in glycogen catabolism, the phosphorolytic cleavage of glycogen to produce glucose-1-phosphate, and plays a central role in maintaining cellular and organismal glucose homeostasis. This Homo sapiens (Human) protein is Glycogen phosphorylase, liver form.